The following is a 279-amino-acid chain: 4-hydroxy-3-methylbut-2-enyl diphosphate reductase (279 aa).

C12 is a [4Fe-4S] cluster binding site. (2E)-4-hydroxy-3-methylbut-2-enyl diphosphate-binding residues include H42 and H74. Positions 42 and 74 each coordinate dimethylallyl diphosphate. Isopentenyl diphosphate-binding residues include H42 and H74. Position 96 (C96) interacts with [4Fe-4S] cluster. H124 contributes to the (2E)-4-hydroxy-3-methylbut-2-enyl diphosphate binding site. H124 provides a ligand contact to dimethylallyl diphosphate. H124 provides a ligand contact to isopentenyl diphosphate. E126 serves as the catalytic Proton donor. Residue T162 participates in (2E)-4-hydroxy-3-methylbut-2-enyl diphosphate binding. C190 contributes to the [4Fe-4S] cluster binding site. Residues S218, S219, N220, and S263 each contribute to the (2E)-4-hydroxy-3-methylbut-2-enyl diphosphate site. Dimethylallyl diphosphate-binding residues include S218, S219, N220, and S263. Isopentenyl diphosphate contacts are provided by S218, S219, N220, and S263.

Belongs to the IspH family. [4Fe-4S] cluster is required as a cofactor.

It carries out the reaction isopentenyl diphosphate + 2 oxidized [2Fe-2S]-[ferredoxin] + H2O = (2E)-4-hydroxy-3-methylbut-2-enyl diphosphate + 2 reduced [2Fe-2S]-[ferredoxin] + 2 H(+). The enzyme catalyses dimethylallyl diphosphate + 2 oxidized [2Fe-2S]-[ferredoxin] + H2O = (2E)-4-hydroxy-3-methylbut-2-enyl diphosphate + 2 reduced [2Fe-2S]-[ferredoxin] + 2 H(+). It participates in isoprenoid biosynthesis; dimethylallyl diphosphate biosynthesis; dimethylallyl diphosphate from (2E)-4-hydroxy-3-methylbutenyl diphosphate: step 1/1. The protein operates within isoprenoid biosynthesis; isopentenyl diphosphate biosynthesis via DXP pathway; isopentenyl diphosphate from 1-deoxy-D-xylulose 5-phosphate: step 6/6. In terms of biological role, catalyzes the conversion of 1-hydroxy-2-methyl-2-(E)-butenyl 4-diphosphate (HMBPP) into a mixture of isopentenyl diphosphate (IPP) and dimethylallyl diphosphate (DMAPP). Acts in the terminal step of the DOXP/MEP pathway for isoprenoid precursor biosynthesis. The chain is 4-hydroxy-3-methylbut-2-enyl diphosphate reductase from Alkaliphilus oremlandii (strain OhILAs) (Clostridium oremlandii (strain OhILAs)).